Here is a 257-residue protein sequence, read N- to C-terminus: Mating-type protein A2 (257 aa).

A DNA-binding region (HMG box) is located at residues 58-132 (YTRPRNQFVL…EENWHKYTHY (75 aa)). The interval 210–239 (QPKTKMNSNLSKLRFKSKQPPTPPEENSNV) is disordered.

Belongs to the MATA2 family.

It is found in the nucleus. Functionally, mating type proteins are sequence specific DNA-binding proteins that act as master switches in yeast differentiation by controlling gene expression in a cell type-specific fashion. Transcriptional activator that induces the transcription of a-specific genes. This Kluyveromyces lactis (strain ATCC 8585 / CBS 2359 / DSM 70799 / NBRC 1267 / NRRL Y-1140 / WM37) (Yeast) protein is Mating-type protein A2 (MATA2).